A 286-amino-acid chain; its full sequence is Beta-lactamase SHV-5 (286 aa).

Positions 1–21 are cleaved as a signal peptide; that stretch reads MRYIRLCIISLLATLPLAVHA. The active-site Acyl-ester intermediate is S66. C73 and C119 are oxidised to a cystine. The active-site Proton acceptor is E164. Residue 230–232 coordinates substrate; that stretch reads KTG.

This sequence belongs to the class-A beta-lactamase family.

The catalysed reaction is a beta-lactam + H2O = a substituted beta-amino acid. Functionally, SHV enzymes hydrolyze broad spectrum cephalosporins notably cefotaxime and ceftazidime. SHV-5 causes particularly high levels of resistance to aztreonam and ceftazidime. The chain is Beta-lactamase SHV-5 (bla) from Klebsiella pneumoniae.